The sequence spans 478 residues: Succinyl-CoA:acetate/propanoyl-CoA:succinate CoA transferase (478 aa).

Residues 1-30 (MYQLAFLRCRYASPIVREARRAFHASRKCQ) constitute a mitochondrion transit peptide. CoA is bound at residue 256–260 (GIGAI). The active-site 5-glutamyl coenzyme A thioester intermediate is the Glu-279. Ile-354, Gly-377, and Lys-404 together coordinate CoA.

This sequence belongs to the acetyl-CoA hydrolase/transferase family.

It localises to the mitochondrion. The catalysed reaction is succinyl-CoA + acetate = succinate + acetyl-CoA. It carries out the reaction propanoyl-CoA + succinate = propanoate + succinyl-CoA. Transferase involved in anaerobic fumarate-respiration in the mitochondria. Catalyzes the transfer of the CoA moiety of acetyl-CoA or propionyl-CoA to succinate, thereby forming acetate and propionate, respectively. Acetate and propionate are the two major metabolic end products in the anaerobic mitochondrial metabolism of F.hepatica. Also displays CoA transferase activities from acetyl-CoA to propionate, acetate and butyrate. The polypeptide is Succinyl-CoA:acetate/propanoyl-CoA:succinate CoA transferase (Fasciola hepatica (Liver fluke)).